We begin with the raw amino-acid sequence, 346 residues long: Ephrin-B1 (346 aa).

A signal peptide spans M1–P27. The Extracellular segment spans residues L28–K237. The Ephrin RBD domain maps to K30 to V164. 2 disulfides stabilise this stretch: C64-C101 and C89-C153. Residue N139 is glycosylated (N-linked (GlcNAc...) asparagine). Positions N169–G228 are disordered. The segment covering S205–S218 has biased composition (basic and acidic residues). The chain crosses the membrane as a helical span at residues V238–L258. The Cytoplasmic portion of the chain corresponds to T259 to V346. The Nuclear localization signal motif lies at V260–T273. The interval L263–T294 is interaction with ZHX2. Phosphoserine is present on residues S281 and S287. The short motif at Y344–V346 is the PDZ-binding element.

The protein belongs to the ephrin family. As to quaternary structure, interacts (via PDZ-binding motif) with GRIP1 and GRIP2 (via PDZ domain 6). Interacts with TLE1. The intracellular domain peptide interacts with ZHX2; the interaction enhances ZHX2 transcriptional repression activity. Post-translationally, inducible phosphorylation of tyrosine residues in the cytoplasmic domain. Proteolytically processed. The ectodomain is cleaved, probably by a metalloprotease, to produce a membrane-tethered C-terminal fragment. This fragment is then further processed by the gamma-secretase complex to yield a soluble intracellular domain peptide which can translocate to the nucleus. The intracellular domain peptide is highly labile suggesting that it is targeted for degradation by the proteasome. As to expression, widely expressed. Detected in both neuronal and non-neuronal tissues. Seems to have particularly strong expression in retina, sciatic nerve, heart and spinal cord.

The protein resides in the cell membrane. The protein localises to the membrane raft. Its subcellular location is the nucleus. Functionally, cell surface transmembrane ligand for Eph receptors, a family of receptor tyrosine kinases which are crucial for migration, repulsion and adhesion during neuronal, vascular and epithelial development. Binding to Eph receptors residing on adjacent cells leads to contact-dependent bidirectional signaling into neighboring cells. Shows high affinity for the receptor tyrosine kinase EPHB1/ELK. Can also bind EPHB2 and EPHB3. Binds to, and induces collapse of, commissural axons/growth cones in vitro. May play a role in constraining the orientation of longitudinally projecting axons. This chain is Ephrin-B1 (EFNB1), found in Homo sapiens (Human).